Reading from the N-terminus, the 268-residue chain is Shikimate dehydrogenase (NADP(+)) (268 aa).

Thr62 contacts shikimate. Lys66 (proton acceptor) is an active-site residue. Position 78 (Glu78) interacts with NADP(+). Shikimate contacts are provided by Asn87 and Asp102. Residues 126–130 (GSGGI) and Leu207 each bind NADP(+). Tyr209 lines the shikimate pocket. Gly230 is a binding site for NADP(+).

Belongs to the shikimate dehydrogenase family. Homodimer.

It carries out the reaction shikimate + NADP(+) = 3-dehydroshikimate + NADPH + H(+). It participates in metabolic intermediate biosynthesis; chorismate biosynthesis; chorismate from D-erythrose 4-phosphate and phosphoenolpyruvate: step 4/7. Functionally, involved in the biosynthesis of the chorismate, which leads to the biosynthesis of aromatic amino acids. Catalyzes the reversible NADPH linked reduction of 3-dehydroshikimate (DHSA) to yield shikimate (SA). In Thermoplasma acidophilum (strain ATCC 25905 / DSM 1728 / JCM 9062 / NBRC 15155 / AMRC-C165), this protein is Shikimate dehydrogenase (NADP(+)).